Reading from the N-terminus, the 581-residue chain is Arginine--tRNA ligase (581 aa).

A 'HIGH' region motif is present at residues 122–132 (PNVAKPMHVGH).

Belongs to the class-I aminoacyl-tRNA synthetase family. Monomer.

The protein resides in the cytoplasm. The enzyme catalyses tRNA(Arg) + L-arginine + ATP = L-arginyl-tRNA(Arg) + AMP + diphosphate. The polypeptide is Arginine--tRNA ligase (Francisella tularensis subsp. novicida (strain U112)).